A 176-amino-acid polypeptide reads, in one-letter code: NAD(P)H-quinone oxidoreductase subunit 6, chloroplastic (176 aa).

The next 5 helical transmembrane spans lie at 10-30 (FLLVFLGLGLILGGLGVVLLP), 32-52 (PIYSAFSLGLVFVCISLFYIL), 61-81 (AQLLIYVGAINVLIIFAVMFI), 92-112 (LWTVGDGITSVVCTSLFVSLI), and 152-172 (FFLPFEFISIILLVALIGAIA).

This sequence belongs to the complex I subunit 6 family. As to quaternary structure, NDH is composed of at least 16 different subunits, 5 of which are encoded in the nucleus.

It localises to the plastid. It is found in the chloroplast thylakoid membrane. The catalysed reaction is a plastoquinone + NADH + (n+1) H(+)(in) = a plastoquinol + NAD(+) + n H(+)(out). The enzyme catalyses a plastoquinone + NADPH + (n+1) H(+)(in) = a plastoquinol + NADP(+) + n H(+)(out). NDH shuttles electrons from NAD(P)H:plastoquinone, via FMN and iron-sulfur (Fe-S) centers, to quinones in the photosynthetic chain and possibly in a chloroplast respiratory chain. The immediate electron acceptor for the enzyme in this species is believed to be plastoquinone. Couples the redox reaction to proton translocation, and thus conserves the redox energy in a proton gradient. In Lactuca sativa (Garden lettuce), this protein is NAD(P)H-quinone oxidoreductase subunit 6, chloroplastic (ndhG).